We begin with the raw amino-acid sequence, 223 residues long: Small ribosomal subunit protein uS3 (223 aa).

The region spanning 39 to 117 is the KH type-2 domain; the sequence is IREHLRKKPS…RPELNAKLVA (79 aa).

The protein belongs to the universal ribosomal protein uS3 family. Part of the 30S ribosomal subunit. Forms a tight complex with proteins S10 and S14.

Binds the lower part of the 30S subunit head. Binds mRNA in the 70S ribosome, positioning it for translation. This is Small ribosomal subunit protein uS3 from Chlamydia felis (strain Fe/C-56) (Chlamydophila felis).